The following is a 266-amino-acid chain: Enterotoxin type C-2 (266 aa).

The signal sequence occupies residues 1-27 (MNKSRFISCVILIFALILVLFTPNVLA). 5 residues coordinate Zn(2+): Asp-36, His-74, Glu-98, Glu-107, and Asp-110. A disulfide bond links Cys-120 and Cys-137. The Zn(2+) site is built by His-145, Glu-146, and His-149.

This sequence belongs to the staphylococcal/streptococcal toxin family. Interacts with host MHC class II molecules composed of alpha/HLA-DRA and beta/HLA-DRB1 chains. Zn(2+) serves as cofactor.

It is found in the secreted. Its function is as follows. Staphylococcal enterotoxin that activates the host immune system by binding as unprocessed molecules to major histocompatibility (MHC) complex class II and T-cell receptor (TCR) molecules. In turn, this ternary complex activates a large number of T-lymphocytes initiating a systemic release of pro-inflammatory cytokines. Also causes the intoxication staphylococcal food poisoning syndrome. This chain is Enterotoxin type C-2 (entC2), found in Staphylococcus aureus.